Consider the following 620-residue polypeptide: 1-deoxy-D-xylulose-5-phosphate synthase (620 aa).

Thiamine diphosphate contacts are provided by residues H75 and 116-118; that span reads AHS. D147 contributes to the Mg(2+) binding site. Thiamine diphosphate-binding positions include 148–149, N177, Y284, and E366; that span reads GA. N177 provides a ligand contact to Mg(2+).

Belongs to the transketolase family. DXPS subfamily. As to quaternary structure, homodimer. Mg(2+) is required as a cofactor. Thiamine diphosphate serves as cofactor.

It carries out the reaction D-glyceraldehyde 3-phosphate + pyruvate + H(+) = 1-deoxy-D-xylulose 5-phosphate + CO2. It participates in metabolic intermediate biosynthesis; 1-deoxy-D-xylulose 5-phosphate biosynthesis; 1-deoxy-D-xylulose 5-phosphate from D-glyceraldehyde 3-phosphate and pyruvate: step 1/1. Catalyzes the acyloin condensation reaction between C atoms 2 and 3 of pyruvate and glyceraldehyde 3-phosphate to yield 1-deoxy-D-xylulose-5-phosphate (DXP). The sequence is that of 1-deoxy-D-xylulose-5-phosphate synthase from Bordetella pertussis (strain Tohama I / ATCC BAA-589 / NCTC 13251).